The following is a 196-amino-acid chain: Large ribosomal subunit protein uL10 (196 aa).

Positions K169–E196 are disordered. Residues E172 to E196 are compositionally biased toward low complexity.

It belongs to the universal ribosomal protein uL10 family. Part of the ribosomal stalk of the 50S ribosomal subunit. The N-terminus interacts with L11 and the large rRNA to form the base of the stalk. The C-terminus forms an elongated spine to which L12 dimers bind in a sequential fashion forming a multimeric L10(L12)X complex.

Its function is as follows. Forms part of the ribosomal stalk, playing a central role in the interaction of the ribosome with GTP-bound translation factors. This chain is Large ribosomal subunit protein uL10, found in Mycobacterium avium (strain 104).